Consider the following 388-residue polypeptide: 5-hydroxytryptamine receptor 1B (388 aa).

The tract at residues 1-29 (MEQPSRLCSPPASGSLTSSQTNHSTFPNP) is disordered. At 1–45 (MEQPSRLCSPPASGSLTSSQTNHSTFPNPNCSAPDLEPYQDSIAL) the chain is on the extracellular side. The segment covering 12–29 (ASGSLTSSQTNHSTFPNP) has biased composition (polar residues). 2 N-linked (GlcNAc...) asparagine glycosylation sites follow: Asn22 and Asn30. The chain crosses the membrane as a helical span at residues 46 to 71 (PWKVLLATFLGLITLGTTLSNAFVIA). Topologically, residues 72–85 (TVSRTRKLHTPANY) are cytoplasmic. Residues 86-110 (LIASLAVTDLLVSILVMPISTMYTV) traverse the membrane as a helical segment. The Extracellular segment spans residues 111-118 (TGRWTLGQ). A helical transmembrane segment spans residues 119 to 144 (VVCDFWLSSDITCCTASILHLCVIAL). An intrachain disulfide couples Cys121 to Cys197. Residues Asp128 and Thr133 each contribute to the ergotamine site. Positions 145 to 147 (DRY) match the DRY motif; important for ligand-induced conformation changes and signaling motif. The Cytoplasmic portion of the chain corresponds to 145 to 164 (DRYWAITDAVEYSAKRTPKR). The helical transmembrane segment at 165-183 (AAGMIIMVWVFSVSISMPP) threads the bilayer. Residues 184–203 (LFWRQAKAEEVADCSVNTDH) are Extracellular-facing. Val199 lines the ergotamine pocket. A helical membrane pass occupies residues 204–227 (ILYTVYSTVGAFYFPTLLLIALYG). At 228 to 313 (RIYVEARSRI…AARERKATRT (86 aa)) the chain is on the cytoplasmic side. A disordered region spans residues 249-282 (LTRAQLITDSPGSSSSGTSINSRAPEGPSESGSP). Positions 255-270 (ITDSPGSSSSGTSINS) are enriched in low complexity. A helical transmembrane segment spans residues 314-335 (LGIILGAFIVCWLPFFIISLAL). Residues 336-345 (PICDDACWFH) are Extracellular-facing. Residues 346-368 (LAIFDFFNWLGYLNSLINPIIYT) form a helical membrane-spanning segment. The short motif at 363 to 367 (NPIIY) is the NPxxY motif; important for ligand-induced conformation changes and signaling element. The Cytoplasmic portion of the chain corresponds to 369-388 (KSNDDFKQAFQKLMRFRRTS).

Belongs to the G-protein coupled receptor 1 family. Homodimer. Heterodimer with HTR1D. Post-translationally, phosphorylated. Desensitization of the receptor may be mediated by its phosphorylation. Palmitoylated.

The protein localises to the cell membrane. In terms of biological role, G-protein coupled receptor for 5-hydroxytryptamine (serotonin). Also functions as a receptor for ergot alkaloid derivatives, various anxiolytic and antidepressant drugs and other psychoactive substances, such as lysergic acid diethylamide (LSD). Ligand binding causes a conformation change that triggers signaling via guanine nucleotide-binding proteins (G proteins) and modulates the activity of downstream effectors, such as adenylate cyclase. HTR1B is coupled to G(i)/G(o) G alpha proteins and mediates inhibitory neurotransmission by inhibiting adenylate cyclase activity. Arrestin family members inhibit signaling via G proteins and mediate activation of alternative signaling pathways. Regulates the release of 5-hydroxytryptamine, dopamine and acetylcholine in the brain, and thereby affects neural activity, nociceptive processing, pain perception, mood and behavior. Besides, plays a role in vasoconstriction of cerebral arteries. This is 5-hydroxytryptamine receptor 1B (HTR1B) from Didelphis virginiana (North American opossum).